Consider the following 494-residue polypeptide: Smoothelin-like protein 1 (494 aa).

Composition is skewed to basic and acidic residues over residues 1 to 10 (MEQKEGKLSE), 74 to 104 (DEVKVESQREAGGKEDAEAELKKEDGEKEET), 112 to 166 (TGRK…KATV), and 179 to 232 (TGQR…KEEA). Residues 1 to 348 (MEQKEGKLSE…ARPRGPRAQN (348 aa)) are disordered. Positions 123-145 (KEAEEKESTLASEKQKAEEKEAK) form a coiled coil. The span at 233 to 255 (DAKEEAEDAEEAEPGSPSEEQEQ) shows a compositional bias: acidic residues. Composition is skewed to low complexity over residues 269–279 (PSSPEEWPESP) and 302–314 (SPSASESSPSDVP). A compositionally biased stretch (basic and acidic residues) spans 324–335 (GEKKEKAPERRV). A Phosphoserine modification is found at Ser-336. A Calponin-homology (CH) domain is found at 378 to 484 (GGVKNMLLEW…YIQELYRSLV (107 aa)). The interval 476–494 (IQELYRSLVQKGLVKTKKK) is calmodulin-binding.

This sequence belongs to the smoothelin family. As to quaternary structure, interacts with PPP1R12A. Maximal phosphorylation of Ser-336 correlates with maximal relaxation of aorta in response to acetylcholine. As to expression, expressed in striated muscles, specifically in type 2a fibers (at protein level).

The protein resides in the cytoplasm. The protein localises to the myofibril. It is found in the sarcomere. It localises to the i band. Its subcellular location is the m line. The protein resides in the nucleus. In terms of biological role, plays a role in the regulation of contractile properties of both striated and smooth muscles. When unphosphorylated, may inhibit myosin dephosphorylation. Phosphorylation at Ser-299 reduces this inhibitory activity. This is Smoothelin-like protein 1 (SMTNL1) from Homo sapiens (Human).